We begin with the raw amino-acid sequence, 234 residues long: UPF0502 protein Bphy_5360 (234 aa).

This sequence belongs to the UPF0502 family.

The chain is UPF0502 protein Bphy_5360 from Paraburkholderia phymatum (strain DSM 17167 / CIP 108236 / LMG 21445 / STM815) (Burkholderia phymatum).